We begin with the raw amino-acid sequence, 627 residues long: Coiled-coil domain-containing protein 22 (627 aa).

Residues 1 to 321 (MEEADRILIH…VADVPATSQR (321 aa)) form a sufficient for interaction with COMMD1 region. Residues 1 to 447 (MEEADRILIH…LQDCRELESS (447 aa)) form a sufficicient and required for interaction with CCDC93 region. Ser-410 bears the Phosphoserine mark. Positions 448 to 535 (RRLAEIQELH…NSLSGKLDRT (88 aa)) form a coiled coil.

Belongs to the CCDC22 family. Component of the commander complex consisting of the CCC subcomplex and the retriever subcomplex. Component of the CCC (COMMD/CCDC22/CCDC93) subcomplex consisting of COMMD1, COMMD2, COMMD3, COMMD4, COMMD5, COMMD6, COMMD7, COMMD8, COMMD9, COMMD10, CCDC22 and CCDC93. Forms a coiled-coil heterodimer with CCDC22; this heterodimer interacts with the guanine nucleotide exchange factor DENND10; the interaction is direct. Interacts with CUL1, CUL2, CUL3, SKP1, BTRC. Interacts with SNX17 and SNX31. Interacts with CPNE1 and CPNE4.

It localises to the endosome. Its subcellular location is the cytoplasm. The protein localises to the cytoskeleton. The protein resides in the microtubule organizing center. It is found in the centrosome. Its function is as follows. Component of the commander complex that is essential for endosomal recycling of transmembrane cargos; the Commander complex is composed of composed of the CCC subcomplex and the retriever subcomplex. Component of the CCC complex, which is involved in the regulation of endosomal recycling of surface proteins, including integrins, signaling receptor and channels. Involved in regulation of NF-kappa-B signaling. Promotes ubiquitination of I-kappa-B-kinase subunit IKBKB and its subsequent proteasomal degradation leading to NF-kappa-B activation; the function may involve association with COMMD8 and a CUL1-dependent E3 ubiquitin ligase complex. May down-regulate NF-kappa-B activity via association with COMMD1 and involving a CUL2-dependent E3 ubiquitin ligase complex. Regulates the cellular localization of COMM domain-containing proteins, such as COMMD1 and COMMD10. Component of the CCC complex, which is involved in the regulation of endosomal recycling of surface proteins, including integrins, signaling receptor and channels. The CCC complex associates with SNX17, retriever and WASH complexes to prevent lysosomal degradation and promote cell surface recycling of numerous cargos such as integrins ITGA5:ITGB1. Plays a role in copper ion homeostasis. Involved in copper-dependent ATP7A trafficking between the trans-Golgi network and vesicles in the cell periphery; the function is proposed to depend on its association within the CCC complex and cooperation with the WASH complex on early endosomes. The chain is Coiled-coil domain-containing protein 22 (Ccdc22) from Mus musculus (Mouse).